A 474-amino-acid chain; its full sequence is tRNA-2-methylthio-N(6)-dimethylallyladenosine synthase (474 aa).

An MTTase N-terminal domain is found at 3–120 (KKLHIKTWGC…LPEMINHVNG (118 aa)). 6 residues coordinate [4Fe-4S] cluster: Cys12, Cys49, Cys83, Cys157, Cys161, and Cys164. Residues 143 to 375 (RAEGPTAFVS…QERITQQAMQ (233 aa)) form the Radical SAM core domain. In terms of domain architecture, TRAM spans 378-441 (RRMKGKVQRI…PNSLRGVLLR (64 aa)).

It belongs to the methylthiotransferase family. MiaB subfamily. In terms of assembly, monomer. Requires [4Fe-4S] cluster as cofactor.

The protein localises to the cytoplasm. The enzyme catalyses N(6)-dimethylallyladenosine(37) in tRNA + (sulfur carrier)-SH + AH2 + 2 S-adenosyl-L-methionine = 2-methylsulfanyl-N(6)-dimethylallyladenosine(37) in tRNA + (sulfur carrier)-H + 5'-deoxyadenosine + L-methionine + A + S-adenosyl-L-homocysteine + 2 H(+). Its function is as follows. Catalyzes the methylthiolation of N6-(dimethylallyl)adenosine (i(6)A), leading to the formation of 2-methylthio-N6-(dimethylallyl)adenosine (ms(2)i(6)A) at position 37 in tRNAs that read codons beginning with uridine. This Sodalis glossinidius (strain morsitans) protein is tRNA-2-methylthio-N(6)-dimethylallyladenosine synthase.